A 513-amino-acid chain; its full sequence is GMP synthase [glutamine-hydrolyzing] (513 aa).

The 190-residue stretch at 9–198 (LILVLDFGSQ…VRRVCECKGQ (190 aa)) folds into the Glutamine amidotransferase type-1 domain. The Nucleophile role is filled by Cys-86. Catalysis depends on residues His-172 and Glu-174. The region spanning 199 to 388 (WTMENFIEIE…LGIPEHLVWR (190 aa)) is the GMPS ATP-PPase domain. ATP is bound at residue 226 to 232 (SGGVDSS).

In terms of assembly, homodimer.

The catalysed reaction is XMP + L-glutamine + ATP + H2O = GMP + L-glutamate + AMP + diphosphate + 2 H(+). It participates in purine metabolism; GMP biosynthesis; GMP from XMP (L-Gln route): step 1/1. Functionally, catalyzes the synthesis of GMP from XMP. This is GMP synthase [glutamine-hydrolyzing] from Staphylococcus aureus (strain MSSA476).